We begin with the raw amino-acid sequence, 242 residues long: Uridylate kinase (242 aa).

17–20 is an ATP binding site; that stretch reads KLSG. G59 serves as a coordination point for UMP. ATP is bound by residues G60 and R64. Residues D79 and 140–147 each bind UMP; that span reads LGNPFFTT. 3 residues coordinate ATP: T167, Y173, and D176.

This sequence belongs to the UMP kinase family. Homohexamer.

Its subcellular location is the cytoplasm. The catalysed reaction is UMP + ATP = UDP + ADP. Its pathway is pyrimidine metabolism; CTP biosynthesis via de novo pathway; UDP from UMP (UMPK route): step 1/1. Its activity is regulated as follows. Inhibited by UTP. Catalyzes the reversible phosphorylation of UMP to UDP. In Buchnera aphidicola subsp. Baizongia pistaciae (strain Bp), this protein is Uridylate kinase.